The chain runs to 133 residues: Small ribosomal subunit protein uS8 (133 aa).

It belongs to the universal ribosomal protein uS8 family. Part of the 30S ribosomal subunit. Contacts proteins S5 and S12.

Its function is as follows. One of the primary rRNA binding proteins, it binds directly to 16S rRNA central domain where it helps coordinate assembly of the platform of the 30S subunit. The protein is Small ribosomal subunit protein uS8 of Orientia tsutsugamushi (strain Boryong) (Rickettsia tsutsugamushi).